Reading from the N-terminus, the 174-residue chain is Large ribosomal subunit protein bL17 (174 aa).

The protein belongs to the bacterial ribosomal protein bL17 family. In terms of assembly, part of the 50S ribosomal subunit. Contacts protein L32.

The protein is Large ribosomal subunit protein bL17 of Acetivibrio thermocellus (strain ATCC 27405 / DSM 1237 / JCM 9322 / NBRC 103400 / NCIMB 10682 / NRRL B-4536 / VPI 7372) (Clostridium thermocellum).